A 604-amino-acid polypeptide reads, in one-letter code: Glutamine--fructose-6-phosphate aminotransferase [isomerizing] (604 aa).

The Nucleophile; for GATase activity role is filled by Cys-2. The Glutamine amidotransferase type-2 domain occupies 2 to 218; that stretch reads CGIVGVVGNR…DKELVILTKD (217 aa). SIS domains follow at residues 284–423 and 456–594; these read IVKT…ANGK and VEKL…VDKP. Lys-599 serves as the catalytic For Fru-6P isomerization activity.

As to quaternary structure, homodimer.

The protein localises to the cytoplasm. It catalyses the reaction D-fructose 6-phosphate + L-glutamine = D-glucosamine 6-phosphate + L-glutamate. Catalyzes the first step in hexosamine metabolism, converting fructose-6P into glucosamine-6P using glutamine as a nitrogen source. The polypeptide is Glutamine--fructose-6-phosphate aminotransferase [isomerizing] (Streptococcus pyogenes serotype M6 (strain ATCC BAA-946 / MGAS10394)).